A 195-amino-acid chain; its full sequence is Transcriptional regulator GfcR (195 aa).

The protein belongs to the purine/pyrimidine phosphoribosyltransferase family. GfcR subfamily.

This chain is Transcriptional regulator GfcR, found in Archaeoglobus fulgidus (strain ATCC 49558 / DSM 4304 / JCM 9628 / NBRC 100126 / VC-16).